Consider the following 399-residue polypeptide: Na(+)/H(+) antiporter NhaA (399 aa).

11 helical membrane passes run 12 to 32 (LDIAAGVILVGAAVLALIAAN), 60 to 80 (LLLWINDGLMAVFFLLVGLEI), 94 to 114 (LAALPAVAAVGGMVVPALIYA), 126 to 146 (GWAIPAATDIAFALGILTLLG), 155 to 175 (IFLTALAIIDDLGAILIIAFF), 178 to 198 (ASLSPLALLLAAACLALLIGL), 206 to 226 (LWPYLLIGVVLWVCVLKSGVH), 263 to 283 (PWVTYAILPLFAFANAGVSLA), 284 to 304 (GLPPSALLAPVPLGIVLGLFL), 336 to 356 (GVALITGVGFTMSLFIGTLAF), and 372 to 392 (LGVLSGSLLSGVIGYLVLRLS).

It belongs to the NhaA Na(+)/H(+) (TC 2.A.33) antiporter family.

It localises to the cell inner membrane. The catalysed reaction is Na(+)(in) + 2 H(+)(out) = Na(+)(out) + 2 H(+)(in). Na(+)/H(+) antiporter that extrudes sodium in exchange for external protons. In Rhodospirillum rubrum (strain ATCC 11170 / ATH 1.1.1 / DSM 467 / LMG 4362 / NCIMB 8255 / S1), this protein is Na(+)/H(+) antiporter NhaA.